Consider the following 260-residue polypeptide: Neuraminyllactose-binding hemagglutinin (260 aa).

The signal sequence occupies residues 1 to 27; it reads MKTNGHFKDFAWKKCFLGASVVALLVG. Cysteine 28 carries the N-palmitoyl cysteine lipid modification. Cysteine 28 is lipidated: S-diacylglycerol cysteine.

It is found in the cell outer membrane. This is Neuraminyllactose-binding hemagglutinin (hpaA) from Helicobacter pylori (strain J99 / ATCC 700824) (Campylobacter pylori J99).